Reading from the N-terminus, the 326-residue chain is Aspartate carbamoyltransferase catalytic subunit (326 aa).

Carbamoyl phosphate contacts are provided by Arg65 and Thr66. Position 93 (Lys93) interacts with L-aspartate. Arg115, His143, and Gln146 together coordinate carbamoyl phosphate. L-aspartate-binding residues include Arg176 and Arg230. Residues Gly271 and Pro272 each contribute to the carbamoyl phosphate site.

It belongs to the aspartate/ornithine carbamoyltransferase superfamily. ATCase family. In terms of assembly, heterododecamer (2C3:3R2) of six catalytic PyrB chains organized as two trimers (C3), and six regulatory PyrI chains organized as three dimers (R2).

It carries out the reaction carbamoyl phosphate + L-aspartate = N-carbamoyl-L-aspartate + phosphate + H(+). Its pathway is pyrimidine metabolism; UMP biosynthesis via de novo pathway; (S)-dihydroorotate from bicarbonate: step 2/3. Its function is as follows. Catalyzes the condensation of carbamoyl phosphate and aspartate to form carbamoyl aspartate and inorganic phosphate, the committed step in the de novo pyrimidine nucleotide biosynthesis pathway. The chain is Aspartate carbamoyltransferase catalytic subunit from Mesorhizobium japonicum (strain LMG 29417 / CECT 9101 / MAFF 303099) (Mesorhizobium loti (strain MAFF 303099)).